The chain runs to 222 residues: Protein Thf1 (222 aa).

Residues 169–208 are a coiled coil; sequence IEKVKRDLELYRSNLDKINQARSLMKELVEQERKRRAQQT. The tract at residues 197–222 is disordered; that stretch reads VEQERKRRAQQTSAPPAVDASSDAPA. Low complexity predominate over residues 209-222; sequence SAPPAVDASSDAPA.

The protein belongs to the THF1 family.

Its function is as follows. May be involved in photosynthetic membrane biogenesis. This chain is Protein Thf1, found in Thermosynechococcus vestitus (strain NIES-2133 / IAM M-273 / BP-1).